The sequence spans 140 residues: Small ribosomal subunit protein uS9A (140 aa).

This sequence belongs to the universal ribosomal protein uS9 family. Component of the small ribosomal subunit (SSU). Mature yeast ribosomes consist of a small (40S) and a large (60S) subunit. The 40S small subunit contains 1 molecule of ribosomal RNA (18S rRNA) and at least 33 different proteins. The large 60S subunit contains 3 rRNA molecules (25S, 5.8S and 5S rRNA) and at least 46 different proteins.

The protein localises to the cytoplasm. Component of the ribosome, a large ribonucleoprotein complex responsible for the synthesis of proteins in the cell. The small ribosomal subunit (SSU) binds messenger RNAs (mRNAs) and translates the encoded message by selecting cognate aminoacyl-transfer RNA (tRNA) molecules. The large subunit (LSU) contains the ribosomal catalytic site termed the peptidyl transferase center (PTC), which catalyzes the formation of peptide bonds, thereby polymerizing the amino acids delivered by tRNAs into a polypeptide chain. The nascent polypeptides leave the ribosome through a tunnel in the LSU and interact with protein factors that function in enzymatic processing, targeting, and the membrane insertion of nascent chains at the exit of the ribosomal tunnel. In Schizosaccharomyces pombe (strain 972 / ATCC 24843) (Fission yeast), this protein is Small ribosomal subunit protein uS9A (rps1601).